The primary structure comprises 89 residues: Small ribosomal subunit protein uS15 (89 aa).

Residues 1–25 (MSLSAEQKGEIVKKHARTASDTGSP) are disordered.

The protein belongs to the universal ribosomal protein uS15 family. In terms of assembly, part of the 30S ribosomal subunit. Forms a bridge to the 50S subunit in the 70S ribosome, contacting the 23S rRNA.

In terms of biological role, one of the primary rRNA binding proteins, it binds directly to 16S rRNA where it helps nucleate assembly of the platform of the 30S subunit by binding and bridging several RNA helices of the 16S rRNA. Forms an intersubunit bridge (bridge B4) with the 23S rRNA of the 50S subunit in the ribosome. In Alkalilimnicola ehrlichii (strain ATCC BAA-1101 / DSM 17681 / MLHE-1), this protein is Small ribosomal subunit protein uS15.